The primary structure comprises 202 residues: Small ribosomal subunit protein uS4 (202 aa).

Residues 91-157 (CRLDNVVYRA…TPFIVARETH (67 aa)) form the S4 RNA-binding domain.

It belongs to the universal ribosomal protein uS4 family. Part of the 30S ribosomal subunit. Contacts protein S5. The interaction surface between S4 and S5 is involved in control of translational fidelity.

In terms of biological role, one of the primary rRNA binding proteins, it binds directly to 16S rRNA where it nucleates assembly of the body of the 30S subunit. With S5 and S12 plays an important role in translational accuracy. In Nocardioides sp. (strain ATCC BAA-499 / JS614), this protein is Small ribosomal subunit protein uS4.